We begin with the raw amino-acid sequence, 475 residues long: Ribulose bisphosphate carboxylase large chain (475 aa).

Lysine 14 is modified (N6,N6,N6-trimethyllysine). The substrate site is built by asparagine 123 and threonine 173. The active-site Proton acceptor is lysine 175. Lysine 177 provides a ligand contact to substrate. The Mg(2+) site is built by lysine 201, aspartate 203, and glutamate 204. An N6-carboxylysine modification is found at lysine 201. Histidine 294 serves as the catalytic Proton acceptor. The substrate site is built by arginine 295, histidine 327, and serine 379.

Belongs to the RuBisCO large chain family. Type I subfamily. Heterohexadecamer of 8 large chains and 8 small chains; disulfide-linked. The disulfide link is formed within the large subunit homodimers. It depends on Mg(2+) as a cofactor. The disulfide bond which can form in the large chain dimeric partners within the hexadecamer appears to be associated with oxidative stress and protein turnover.

The protein localises to the plastid. It catalyses the reaction 2 (2R)-3-phosphoglycerate + 2 H(+) = D-ribulose 1,5-bisphosphate + CO2 + H2O. The enzyme catalyses D-ribulose 1,5-bisphosphate + O2 = 2-phosphoglycolate + (2R)-3-phosphoglycerate + 2 H(+). Its function is as follows. RuBisCO catalyzes two reactions: the carboxylation of D-ribulose 1,5-bisphosphate, the primary event in carbon dioxide fixation, as well as the oxidative fragmentation of the pentose substrate in the photorespiration process. Both reactions occur simultaneously and in competition at the same active site. This is Ribulose bisphosphate carboxylase large chain (rbcL) from Euglena longa (Euglenophycean alga).